The sequence spans 219 residues: Putative NAD(P)H nitroreductase SSP0379 (219 aa).

This sequence belongs to the nitroreductase family. FMN is required as a cofactor.

The polypeptide is Putative NAD(P)H nitroreductase SSP0379 (Staphylococcus saprophyticus subsp. saprophyticus (strain ATCC 15305 / DSM 20229 / NCIMB 8711 / NCTC 7292 / S-41)).